The following is a 467-amino-acid chain: Zinc finger and BTB domain-containing protein 43 (467 aa).

Residue Met1 is modified to N-acetylmethionine. One can recognise a BTB domain in the interval 33-97 (CDVSIVVQGH…SYTGRLVMPA (65 aa)). 2 disordered regions span residues 134 to 153 (LNHGSDHQSPSSSNYNGLVE) and 162 to 227 (HTDF…EFHY). The segment covering 140-149 (HQSPSSSNYN) has biased composition (polar residues). Composition is skewed to basic and acidic residues over residues 164–174 (DFPKAQELRDG) and 182–194 (KDELSSQVTEHEY). Glycyl lysine isopeptide (Lys-Gly) (interchain with G-Cter in SUMO2) cross-links involve residues Lys182, Lys247, Lys297, and Lys358. A C2H2-type 1; atypical zinc finger spans residues 373–394 (YPCQCGKSFTHKSQRDRHMSMH). A C2H2-type 2 zinc finger spans residues 400–422 (YGCSVCGKKFKMKHHLVGHMKIH). Phosphothreonine is present on Thr423. A C2H2-type 3; atypical zinc finger spans residues 428–450 (YECNICAKRFMWRDSFHRHVTSC). Lys458 is covalently cross-linked (Glycyl lysine isopeptide (Lys-Gly) (interchain with G-Cter in SUMO2)).

The protein belongs to the krueppel C2H2-type zinc-finger protein family. Interacts with BDP1.

Its subcellular location is the nucleus. Functionally, may be involved in transcriptional regulation. This is Zinc finger and BTB domain-containing protein 43 (Zbtb43) from Mus musculus (Mouse).